Consider the following 390-residue polypeptide: Transcription factor bHLH76 (390 aa).

The tract at residues 147–217 is disordered; that stretch reads NVSEDSQSSG…SEKQPSDSLK (71 aa). Positions 207–217 are enriched in basic and acidic residues; it reads NSEKQPSDSLK. One can recognise a bHLH domain in the interval 229–279; that stretch reads QATNSHSLAERVRREKISERMKFLQDLVPGCDKVTGKAVMLDEIINYVQSL.

In terms of assembly, homodimer. Interacts with IBH1. Binds reversibly to CRY2 after blue light illumination. In terms of tissue distribution, expressed constitutively in roots, leaves, stems, and flowers.

Its subcellular location is the nucleus. Functionally, transcriptional activator involved in cell elongation. Regulates the expression of a subset of genes involved in cell expansion by binding to the G-box motif. Binds to chromatin DNA of the FT gene and promotes its expression, and thus triggers flowering in response to blue light. The chain is Transcription factor bHLH76 (BHLH76) from Arabidopsis thaliana (Mouse-ear cress).